We begin with the raw amino-acid sequence, 156 residues long: Ribosomal RNA large subunit methyltransferase H (156 aa).

Residues Leu-73, Gly-104, and 123 to 128 (ISSMTL) each bind S-adenosyl-L-methionine.

This sequence belongs to the RNA methyltransferase RlmH family. As to quaternary structure, homodimer.

The protein resides in the cytoplasm. The catalysed reaction is pseudouridine(1915) in 23S rRNA + S-adenosyl-L-methionine = N(3)-methylpseudouridine(1915) in 23S rRNA + S-adenosyl-L-homocysteine + H(+). Functionally, specifically methylates the pseudouridine at position 1915 (m3Psi1915) in 23S rRNA. This chain is Ribosomal RNA large subunit methyltransferase H, found in Burkholderia multivorans (strain ATCC 17616 / 249).